A 251-amino-acid polypeptide reads, in one-letter code: Probable transcriptional regulatory protein MAB_2888c (251 aa).

Positions 1-20 (MSGHSKWATTKHQKAVKDAR) are disordered.

Belongs to the TACO1 family.

It localises to the cytoplasm. This Mycobacteroides abscessus (strain ATCC 19977 / DSM 44196 / CCUG 20993 / CIP 104536 / JCM 13569 / NCTC 13031 / TMC 1543 / L948) (Mycobacterium abscessus) protein is Probable transcriptional regulatory protein MAB_2888c.